A 240-amino-acid polypeptide reads, in one-letter code: Cilia- and flagella-associated protein 77 (240 aa).

It belongs to the CFAP77 family.

It is found in the cytoplasm. The protein localises to the cytoskeleton. Its subcellular location is the cilium axoneme. It localises to the flagellum axoneme. In terms of biological role, microtubule inner protein (MIP) part of the dynein-decorated doublet microtubules (DMTs) in cilia axoneme, which is required for motile cilia beating. This chain is Cilia- and flagella-associated protein 77, found in Danio rerio (Zebrafish).